A 1043-amino-acid chain; its full sequence is Isoleucine--tRNA ligase (1043 aa).

The 'HIGH' region motif lies at Pro-49–His-59. A 'KMSKS' region motif is present at residues Lys-592 to Arg-596. Residue Lys-595 participates in ATP binding.

Belongs to the class-I aminoacyl-tRNA synthetase family. IleS type 2 subfamily. In terms of assembly, monomer. Requires Zn(2+) as cofactor.

Its subcellular location is the cytoplasm. It catalyses the reaction tRNA(Ile) + L-isoleucine + ATP = L-isoleucyl-tRNA(Ile) + AMP + diphosphate. In terms of biological role, catalyzes the attachment of isoleucine to tRNA(Ile). As IleRS can inadvertently accommodate and process structurally similar amino acids such as valine, to avoid such errors it has two additional distinct tRNA(Ile)-dependent editing activities. One activity is designated as 'pretransfer' editing and involves the hydrolysis of activated Val-AMP. The other activity is designated 'posttransfer' editing and involves deacylation of mischarged Val-tRNA(Ile). The chain is Isoleucine--tRNA ligase from Chlamydia abortus (strain DSM 27085 / S26/3) (Chlamydophila abortus).